The following is a 128-amino-acid chain: Large ribosomal subunit protein bL17 (128 aa).

It belongs to the bacterial ribosomal protein bL17 family. In terms of assembly, part of the 50S ribosomal subunit. Contacts protein L32.

The protein is Large ribosomal subunit protein bL17 of Streptococcus gordonii (strain Challis / ATCC 35105 / BCRC 15272 / CH1 / DL1 / V288).